We begin with the raw amino-acid sequence, 90 residues long: Putative membrane protein insertion efficiency factor (90 aa).

Belongs to the UPF0161 family.

Its subcellular location is the cell inner membrane. In terms of biological role, could be involved in insertion of integral membrane proteins into the membrane. The chain is Putative membrane protein insertion efficiency factor from Thermosynechococcus vestitus (strain NIES-2133 / IAM M-273 / BP-1).